We begin with the raw amino-acid sequence, 118 residues long: Large ribosomal subunit protein uL18 (118 aa).

Belongs to the universal ribosomal protein uL18 family. In terms of assembly, part of the 50S ribosomal subunit; part of the 5S rRNA/L5/L18/L25 subcomplex. Contacts the 5S and 23S rRNAs.

This is one of the proteins that bind and probably mediate the attachment of the 5S RNA into the large ribosomal subunit, where it forms part of the central protuberance. In Limosilactobacillus reuteri (strain DSM 20016) (Lactobacillus reuteri), this protein is Large ribosomal subunit protein uL18.